A 422-amino-acid chain; its full sequence is Mannose-1-phosphate guanylyltransferase regulatory subunit alpha-A (422 aa).

The segment at 2-253 is substrate-binding domain; it reads LKAVILIGGP…DRFWSQIKSA (252 aa). The GDP-alpha-D-mannose site is built by E85 and Q249. Residues 275 to 422 form a hexapeptide repeat domain region; it reads LATNTEGGAK…NRSFKNQIIL (148 aa). Positions 358–386 are C-loop; sequence TPSDPNPNDPYAKIDSETLFRDGKLTPSI.

This sequence belongs to the transferase hexapeptide repeat family. Component of the GMPPA-GMPPB mannose-1-phosphate guanylyltransferase complex composed of 4 gmppa subunits and 8 gmppb subunits; the complex is organized into three layers, a central layer made up of 2 gmppa dimers sandwiched between two layers each made up of 2 gmppb dimers.

It functions in the pathway nucleotide-sugar biosynthesis; GDP-alpha-D-mannose biosynthesis; GDP-alpha-D-mannose from alpha-D-mannose 1-phosphate (GTP route): step 1/1. Functionally, regulatory subunit of the GMPPA-GMPPB mannose-1-phosphate guanylyltransferase complex; reduces the catalytic activity of GMPPB when part of the complex. Mediates allosteric feedback inhibition of GMPPB catalytic activity upon binding GDP-alpha-D-mannose. Together with GMPPB regulates GDP-alpha-D-mannose levels. One of two paralogs (gmppaa and gmppab) that may have redundant functions. This chain is Mannose-1-phosphate guanylyltransferase regulatory subunit alpha-A (gmppaa), found in Danio rerio (Zebrafish).